Reading from the N-terminus, the 149-residue chain is FKBP-type 16 kDa peptidyl-prolyl cis-trans isomerase (149 aa).

In terms of domain architecture, PPIase FKBP-type spans 2–72 (SESVQSNSAV…FSLEPDAAFG (71 aa)).

Belongs to the FKBP-type PPIase family.

The enzyme catalyses [protein]-peptidylproline (omega=180) = [protein]-peptidylproline (omega=0). Its function is as follows. PPIases accelerate the folding of proteins. Substrate specificity carried out with 'Suc-Ala-Xaa-Pro-Phe-4-nitroanilide', where Xaa is the amino acid tested, was found to be Phe &gt; Leu &gt;&gt; Ile &gt; Lys = Ala &gt; Trp &gt; His &gt;&gt; Gln. This is FKBP-type 16 kDa peptidyl-prolyl cis-trans isomerase (fkpB) from Escherichia coli O6:H1 (strain CFT073 / ATCC 700928 / UPEC).